The chain runs to 147 residues: Nucleoside diphosphate kinase (147 aa).

ATP is bound by residues Lys11, Phe59, Arg87, Thr93, Arg104, and Asn114. The active-site Pros-phosphohistidine intermediate is the His117.

The protein belongs to the NDK family. Mg(2+) serves as cofactor.

The protein resides in the cytoplasm. The enzyme catalyses a 2'-deoxyribonucleoside 5'-diphosphate + ATP = a 2'-deoxyribonucleoside 5'-triphosphate + ADP. The catalysed reaction is a ribonucleoside 5'-diphosphate + ATP = a ribonucleoside 5'-triphosphate + ADP. In terms of biological role, major role in the synthesis of nucleoside triphosphates other than ATP. The ATP gamma phosphate is transferred to the NDP beta phosphate via a ping-pong mechanism, using a phosphorylated active-site intermediate. This Sulfurisphaera tokodaii (strain DSM 16993 / JCM 10545 / NBRC 100140 / 7) (Sulfolobus tokodaii) protein is Nucleoside diphosphate kinase.